A 559-amino-acid polypeptide reads, in one-letter code: Serine/threonine-protein kinase bur1 (559 aa).

A Protein kinase domain is found at 40–341; sequence YEVLGKLGEG…AIDALNHPYF (302 aa). Residues 46–54 and lysine 69 contribute to the ATP site; that span reads LGEGTFGEV. The active-site Proton acceptor is the aspartate 171. Positions 359-372 are enriched in basic and acidic residues; sequence SHEFDRRKFQDRKA. The interval 359–559 is disordered; that stretch reads SHEFDRRKFQ…GRDRDAYARR (201 aa). The span at 400 to 414 shows a compositional bias: gly residues; the sequence is GRDGYGGGGRNGANG. 3 stretches are compositionally biased toward basic and acidic residues: residues 457-467, 491-534, and 543-559; these read DHTDGYRDRPP, YDRD…DSRT, and PVRD…YARR.

The protein belongs to the protein kinase superfamily. CMGC Ser/Thr protein kinase family. CDC2/CDKX subfamily.

Its subcellular location is the nucleus. The enzyme catalyses L-seryl-[protein] + ATP = O-phospho-L-seryl-[protein] + ADP + H(+). The catalysed reaction is L-threonyl-[protein] + ATP = O-phospho-L-threonyl-[protein] + ADP + H(+). It catalyses the reaction [DNA-directed RNA polymerase] + ATP = phospho-[DNA-directed RNA polymerase] + ADP + H(+). In terms of biological role, serine/threonine-protein kinase involved in transcription regulation. Phosphorylates the mus-8/ubc2 ubiquitin-conjugating enzyme (E2), leading to monoubiquitination of histone H2B and the silencing of telomeric-associated genes. Also required for histone H3 methylation. Necessary for the recovery from pheromone-induced growth arrest in the cell cycle G1 phase. This Neurospora crassa (strain ATCC 24698 / 74-OR23-1A / CBS 708.71 / DSM 1257 / FGSC 987) protein is Serine/threonine-protein kinase bur1 (stk-1).